We begin with the raw amino-acid sequence, 514 residues long: 2,3-bisphosphoglycerate-independent phosphoglycerate mutase (514 aa).

D14 and S64 together coordinate Mn(2+). S64 (phosphoserine intermediate) is an active-site residue. Substrate-binding positions include H125, 155–156 (RD), R187, R193, 263–266 (RADR), and K337. Mn(2+) contacts are provided by D404, H408, D445, H446, and H464.

This sequence belongs to the BPG-independent phosphoglycerate mutase family. As to quaternary structure, monomer. It depends on Mn(2+) as a cofactor.

It carries out the reaction (2R)-2-phosphoglycerate = (2R)-3-phosphoglycerate. The protein operates within carbohydrate degradation; glycolysis; pyruvate from D-glyceraldehyde 3-phosphate: step 3/5. Catalyzes the interconversion of 2-phosphoglycerate and 3-phosphoglycerate. The sequence is that of 2,3-bisphosphoglycerate-independent phosphoglycerate mutase from Serratia proteamaculans (strain 568).